The chain runs to 58 residues: Large ribosomal subunit protein bL32 (58 aa).

The protein belongs to the bacterial ribosomal protein bL32 family.

The polypeptide is Large ribosomal subunit protein bL32 (Ligilactobacillus salivarius (strain UCC118) (Lactobacillus salivarius)).